Consider the following 646-residue polypeptide: Peptidylprolyl isomerase domain and WD repeat-containing protein 1 (646 aa).

The interval 1–30 (MAAESGSDFQQRRRRRRDPEEPEKTELSER) is disordered. N-acetylalanine is present on Ala2. Basic and acidic residues predominate over residues 17 to 30 (RDPEEPEKTELSER). WD repeat units follow at residues 80–118 (ASMY…FWKK), 124–162 (EFVK…VFDV), 168–208 (INML…IYDG), 213–252 (QPLH…YWTG), 271–309 (TDLY…IFRF), 345–386 (AVER…VETN), and 401–453 (MQLA…MFTK). Positions 455-478 (EPEDTKSADSDRDVFNEKPSKEEV) are enriched in basic and acidic residues. Residues 455-490 (EPEDTKSADSDRDVFNEKPSKEEVMAATQAEGPKRV) form a disordered region. In terms of domain architecture, PPIase cyclophilin-type spans 490–645 (VSDSAIIHTS…EDVSIINITV (156 aa)).

The protein belongs to the cyclophilin-type PPIase family. PPIL1 subfamily. As to quaternary structure, identified in the spliceosome C complex.

The protein localises to the nucleus. The enzyme catalyses [protein]-peptidylproline (omega=180) = [protein]-peptidylproline (omega=0). Inhibited by cyclosporin A (CsA). In terms of biological role, PPIase that catalyzes the cis-trans isomerization of proline imidic peptide bonds in oligopeptides and may therefore assist protein folding. May be involved in pre-mRNA splicing. The chain is Peptidylprolyl isomerase domain and WD repeat-containing protein 1 from Homo sapiens (Human).